The primary structure comprises 358 residues: Arginine kinase (358 aa).

Positions S2–K84 constitute a Phosphagen kinase N-terminal domain. G57–Y61 contacts substrate. A Phosphagen kinase C-terminal domain is found at F112–L350. Residues S115–R119 and H178 each bind ATP. E218 is a binding site for substrate. R222 is an ATP binding site. A substrate-binding site is contributed by C265. ATP contacts are provided by residues R274–H278 and R303–E308. E308 is a binding site for substrate.

Belongs to the ATP:guanido phosphotransferase family.

The enzyme catalyses L-arginine + ATP = N(omega)-phospho-L-arginine + ADP + H(+). The chain is Arginine kinase from Turbo cornutus (Horned turban).